The following is a 160-amino-acid chain: uncharacterized protein (160 aa).

C2H2-type zinc fingers lie at residues L10–H32, Q41–H64, and F75–H98. The residue at position 115 (Y115) is a Phosphotyrosine. S116 bears the Phosphoserine mark.

The protein resides in the nucleus. May be involved in transcriptional regulation. This is an uncharacterized protein from Drosophila melanogaster (Fruit fly).